A 197-amino-acid chain; its full sequence is Protein Hikeshi (197 aa).

A required for F-X-F-G repeats-nucleoporins recognition and nuclear import region spans residues 18–55 (VAEDKFVFDLPDYENINHVVVFMLGTVPFPEGMGGSVY). Positions 124-134 (QTPVGNAAVSS) are flexible linker region involved in nuclear import of HSP70 proteins.

It belongs to the OPI10 family. As to quaternary structure, forms an asymmetric homodimer; required for binding and nuclear import of HSP70 proteins. Interacts with ATP-bound HSP70 proteins. Interacts with NUP62 and NUP153 (via F-X-F-G repeats). Interacts with HSPA8.

It localises to the cytoplasm. The protein resides in the cytosol. Its subcellular location is the nucleus. Its function is as follows. Acts as a specific nuclear import carrier for HSP70 proteins following heat-shock stress: acts by mediating the nucleoporin-dependent translocation of ATP-bound HSP70 proteins into the nucleus. HSP70 proteins import is required to protect cells from heat shock damages. Does not translocate ADP-bound HSP70 proteins into the nucleus. This is Protein Hikeshi from Bos taurus (Bovine).